Reading from the N-terminus, the 2623-residue chain is Immunoglobulin superfamily member 10 (2623 aa).

Residues 1 to 28 (MKVKGRGITCLLVSFAVICLVATPGGKA) form the signal peptide. Positions 29 to 56 (CPRRCACYMPTEVHCTFRYLTSIPDSIP) constitute an LRRNT domain. LRR repeat units follow at residues 58–79 (NVER…DFSG), 82–103 (KLEL…TFSD), 106–127 (ALQV…TFYG), 130–151 (SLTR…VFYG), 154–175 (FLRL…TFVS), and 186–207 (FIKF…MVSY). The LRRCT domain occupies 219–281 (NPWTCDCHLK…VSAAAFQCAK (63 aa)). N-linked (GlcNAc...) asparagine glycans are attached at residues asparagine 319 and asparagine 439. Ig-like C2-type domains are found at residues 461 to 567 (PRAE…YRIT) and 571 to 661 (PLVE…FQVS). 2 disulfides stabilise this stretch: cysteine 497–cysteine 551 and cysteine 595–cysteine 645. Asparagine 627 carries an N-linked (GlcNAc...) asparagine glycan. Disordered stretches follow at residues 668-692 (RPLE…HLKE) and 767-788 (AMPD…QLPN). Asparagine 774 and asparagine 999 each carry an N-linked (GlcNAc...) asparagine glycan. Disordered stretches follow at residues 1334 to 1376 (TQTE…AMTP) and 1434 to 1453 (STIA…TTTR). Positions 1335 to 1356 (QTERSRAQTIQREQEPQKKNRT) are enriched in basic and acidic residues. Positions 1357-1373 (DPNISPDQSSGFTTPTA) are enriched in polar residues. 10 Ig-like C2-type domains span residues 1648–1739 (PRIV…VTLS), 1745–1836 (PRIL…VKIQ), 1841–1933 (PPVI…VMLT), 1941–2034 (PRIE…VSLR), 2037–2135 (PAKI…VHLT), 2141–2229 (PRIR…YKLD), 2234–2331 (PPLI…LEVL), 2337–2427 (PTFR…VILE), 2432–2518 (PVIL…TLIT), and 2528–2623 (PRIT…IQVI). Intrachain disulfides connect cysteine 1670–cysteine 1723, cysteine 1767–cysteine 1820, and cysteine 1864–cysteine 1917. Residues asparagine 1899 and asparagine 1962 are each glycosylated (N-linked (GlcNAc...) asparagine). Intrachain disulfides connect cysteine 1963/cysteine 2016, cysteine 2060/cysteine 2119, cysteine 2163/cysteine 2213, cysteine 2261/cysteine 2313, cysteine 2359/cysteine 2411, cysteine 2454/cysteine 2506, and cysteine 2550/cysteine 2605. The N-linked (GlcNAc...) asparagine glycan is linked to asparagine 2101. A Phosphotyrosine modification is found at tyrosine 2603.

The protein localises to the secreted. Its function is as follows. Involved in the control of early migration of neurons expressing gonadotropin-releasing hormone (GNRH neurons). May be involved in the maintenance of osteochondroprogenitor cells pool. The protein is Immunoglobulin superfamily member 10 (IGSF10) of Homo sapiens (Human).